We begin with the raw amino-acid sequence, 361 residues long: MAGNTIGQLFRVTTFGESHGLALGCIVDGVPPGIPLTEADLQHDLDRRRPGTSRYTTQRREPDQVKILSGVFEGVTTGTSIGLLIENTDQRSQDYSAIKDVFRPGHADYTYEQKYGLRDYRGGGRSSARETAMRVAAGAIAKKYLAEKFGIEIRGCLTQMGDIPLEIKDWSLVEQNPFFCPDPDKIDALDELMRALKKEGDSIGAKVTVVASGVPAGLGEPVFDRLDADIAHALMSINAVKGVEIGDGFDVVALRGSQNRDEITKDGFQSNHAGGILGGISSGQQIIAHMALKPTSSITVPGRTINRFGEEVEMITKGRHDPCVGIRAVPIAEAMLAIVLMDHLLRQRAQNADVKTDIPRW.

Residues R48 and R54 each coordinate NADP(+). FMN is bound by residues 125 to 127, 238 to 239, G278, 293 to 297, and R319; these read RSS, NA, and KPTSS.

Belongs to the chorismate synthase family. Homotetramer. Requires FMNH2 as cofactor.

It carries out the reaction 5-O-(1-carboxyvinyl)-3-phosphoshikimate = chorismate + phosphate. The protein operates within metabolic intermediate biosynthesis; chorismate biosynthesis; chorismate from D-erythrose 4-phosphate and phosphoenolpyruvate: step 7/7. Its function is as follows. Catalyzes the anti-1,4-elimination of the C-3 phosphate and the C-6 proR hydrogen from 5-enolpyruvylshikimate-3-phosphate (EPSP) to yield chorismate, which is the branch point compound that serves as the starting substrate for the three terminal pathways of aromatic amino acid biosynthesis. This reaction introduces a second double bond into the aromatic ring system. The chain is Chorismate synthase from Escherichia coli (strain SE11).